Reading from the N-terminus, the 222-residue chain is Lipid transferase CIDEC (222 aa).

The span at 1–19 (MAMYTAVSTSVVTQQQLSE) shows a compositional bias: polar residues. 2 disordered regions span residues 1 to 33 (MAMY…CRVT) and 203 to 222 (EQPP…KMLQ). Positions 1–33 (MAMYTAVSTSVVTQQQLSEPSAEAPRARPCRVT) are required for liquid-liquid phase separation (LLPS). The CIDE-N domain maps to 26 to 103 (RARPCRVTTA…VLHKGQKWQP (78 aa)).

It belongs to the CIDE family. Homodimer. Homooligomer; undergoes liquid-liquid phase separation (LLPS) via its N-terminus, facilitating lipid droplet fusion, occurs at the lipid droplet contact sites. Interacts with CIDEA. Interacts with PLIN1. Interacts with NFAT5; this interaction is direct and retains NFAT5 in the cytoplasm. Interacts with CEBPB. Interacts with isoform CLSTN3beta of CLSTN3; inhibiting the lipid transferase activity of CIDEC. Post-translationally, ubiquitinated and targeted to proteasomal degradation, resulting in a short half-life (about 15 minutes in 3T3-L1 cells). Protein stability depends on triaclyglycerol synthesis, fatty acid availability and lipid droplet formation.

The protein localises to the lipid droplet. It localises to the endoplasmic reticulum. It is found in the nucleus. The catalysed reaction is a triacyl-sn-glycerol(in) = a triacyl-sn-glycerol(out). Its function is as follows. Lipid transferase specifically expressed in white adipose tissue, which promotes unilocular lipid droplet formation by mediating lipid droplet fusion. Lipid droplet fusion promotes their enlargement, restricting lipolysis and favoring lipid storage. Localizes on the lipid droplet surface, at focal contact sites between lipid droplets, and mediates atypical lipid droplet fusion by undergoing liquid-liquid phase separation (LLPS) and promoting directional net neutral lipid transfer from the smaller to larger lipid droplets. The transfer direction may be driven by the internal pressure difference between the contacting lipid droplet pair. Its role in neutral lipid transfer and lipid droplet enlargement is activated by the interaction with PLIN1. May also act as a CEBPB coactivator in the white adipose tissue to control the expression of a subset of CEBPB downstream target genes, including SOCS1, SOCS3, TGFB1, TGFBR1, ID2 and XDH. When overexpressed in preadipocytes, induces apoptosis or increases cell susceptibility to apoptosis induced by serum deprivation or TGFB treatment. In Bos taurus (Bovine), this protein is Lipid transferase CIDEC.